Here is a 169-residue protein sequence, read N- to C-terminus: Shikimate kinase (169 aa).

12–17 (GCGKST) contributes to the ATP binding site. Ser-16 contacts Mg(2+). Substrate is bound by residues Asp-34, Arg-57, and Gly-79. Residue Arg-116 participates in ATP binding. Residue Arg-133 coordinates substrate.

Belongs to the shikimate kinase family. As to quaternary structure, monomer. Requires Mg(2+) as cofactor.

The protein localises to the cytoplasm. The catalysed reaction is shikimate + ATP = 3-phosphoshikimate + ADP + H(+). The protein operates within metabolic intermediate biosynthesis; chorismate biosynthesis; chorismate from D-erythrose 4-phosphate and phosphoenolpyruvate: step 5/7. Its function is as follows. Catalyzes the specific phosphorylation of the 3-hydroxyl group of shikimic acid using ATP as a cosubstrate. This chain is Shikimate kinase, found in Clostridium beijerinckii (strain ATCC 51743 / NCIMB 8052) (Clostridium acetobutylicum).